A 274-amino-acid polypeptide reads, in one-letter code: Nickel/cobalt efflux system RcnA (274 aa).

Residues 1–12 (MGEFPTLLQQGN) lie on the Periplasmic side of the membrane. A helical membrane pass occupies residues 13 to 33 (GWFFIPSAILLGILHGLEPGH). At 34–51 (SKTMMAAFIIAIKGTVKQ) the chain is on the cytoplasmic side. The helical transmembrane segment at 52–72 (AVMLGLAATLSHTAIVWLIAL) threads the bilayer. The Periplasmic portion of the chain corresponds to 73–85 (GGMYLSRAFTAQS). A helical transmembrane segment spans residues 86–106 (VEPWLQLISAIIILSTACWMF). Residues 107–174 (WRTWRGEQQW…FDGQTVTNGQ (68 aa)) lie on the Cytoplasmic side of the membrane. A compositionally biased stretch (basic and acidic residues) spans 122-141 (HHDHDHDHDHDHDHHGHIHP). The interval 122–143 (HHDHDHDHDHDHDHHGHIHPEG) is disordered. The helical transmembrane segment at 175 to 195 (ILLFGLTGGLIPCPAAITVLL) threads the bilayer. The Periplasmic segment spans residues 196-209 (ICIQLKAFTLGATM). The chain crosses the membrane as a helical span at residues 210–230 (VLSFSLSLALTLVTVGVGAAI). At 231 to 251 (SVQQAAKRWSGFSTLARRAPY) the chain is on the cytoplasmic side. A helical transmembrane segment spans residues 252–272 (FSSILIGLVGVYMGIHGYTGI). The Periplasmic portion of the chain corresponds to 273 to 274 (MQ).

The protein belongs to the NiCoT transporter (TC 2.A.52) family. RcnA subfamily.

It localises to the cell inner membrane. Functionally, efflux system for nickel and cobalt. This chain is Nickel/cobalt efflux system RcnA (rcnA), found in Salmonella paratyphi A (strain ATCC 9150 / SARB42).